The primary structure comprises 171 residues: 3-hydroxydecanoyl-[acyl-carrier-protein] dehydratase (171 aa).

The active site involves H70.

Belongs to the thioester dehydratase family. FabA subfamily. As to quaternary structure, homodimer.

The protein resides in the cytoplasm. The catalysed reaction is a (3R)-hydroxyacyl-[ACP] = a (2E)-enoyl-[ACP] + H2O. The enzyme catalyses (3R)-hydroxydecanoyl-[ACP] = (2E)-decenoyl-[ACP] + H2O. It carries out the reaction (2E)-decenoyl-[ACP] = (3Z)-decenoyl-[ACP]. Its pathway is lipid metabolism; fatty acid biosynthesis. In terms of biological role, necessary for the introduction of cis unsaturation into fatty acids. Catalyzes the dehydration of (3R)-3-hydroxydecanoyl-ACP to E-(2)-decenoyl-ACP and then its isomerization to Z-(3)-decenoyl-ACP. Can catalyze the dehydratase reaction for beta-hydroxyacyl-ACPs with saturated chain lengths up to 16:0, being most active on intermediate chain length. This chain is 3-hydroxydecanoyl-[acyl-carrier-protein] dehydratase, found in Stenotrophomonas maltophilia (strain K279a).